The following is a 163-amino-acid chain: Staphylokinase (163 aa).

The signal sequence occupies residues 1-27 (MLKRSLLFLTVLLLLFSFSSITNEVSA).

This sequence belongs to the staphylokinase family.

Its subcellular location is the secreted. Functionally, potent plasminogen activator that converts plasminogen into plasmin. It forms a 1:1 complex with plasmin, which in turn activates other plasminogen molecules. The protein is Staphylokinase (sak) of Staphylococcus phage phi13 (Bacteriophage phi-13).